A 173-amino-acid polypeptide reads, in one-letter code: Crossover junction endodeoxyribonuclease RuvC (173 aa).

Residues Asp-8, Glu-67, and Asp-139 contribute to the active site. Residues Asp-8, Glu-67, and Asp-139 each contribute to the Mg(2+) site.

This sequence belongs to the RuvC family. As to quaternary structure, homodimer which binds Holliday junction (HJ) DNA. The HJ becomes 2-fold symmetrical on binding to RuvC with unstacked arms; it has a different conformation from HJ DNA in complex with RuvA. In the full resolvosome a probable DNA-RuvA(4)-RuvB(12)-RuvC(2) complex forms which resolves the HJ. It depends on Mg(2+) as a cofactor.

It localises to the cytoplasm. It carries out the reaction Endonucleolytic cleavage at a junction such as a reciprocal single-stranded crossover between two homologous DNA duplexes (Holliday junction).. In terms of biological role, the RuvA-RuvB-RuvC complex processes Holliday junction (HJ) DNA during genetic recombination and DNA repair. Endonuclease that resolves HJ intermediates. Cleaves cruciform DNA by making single-stranded nicks across the HJ at symmetrical positions within the homologous arms, yielding a 5'-phosphate and a 3'-hydroxyl group; requires a central core of homology in the junction. The consensus cleavage sequence is 5'-(A/T)TT(C/G)-3'. Cleavage occurs on the 3'-side of the TT dinucleotide at the point of strand exchange. HJ branch migration catalyzed by RuvA-RuvB allows RuvC to scan DNA until it finds its consensus sequence, where it cleaves and resolves the cruciform DNA. In Shewanella sediminis (strain HAW-EB3), this protein is Crossover junction endodeoxyribonuclease RuvC.